Reading from the N-terminus, the 322-residue chain is Ferredoxin--NADP reductase (322 aa).

7 residues coordinate FAD: Asp-34, Gln-42, Tyr-47, Val-87, Phe-120, Asp-279, and Thr-320.

The protein belongs to the ferredoxin--NADP reductase type 2 family. As to quaternary structure, homodimer. FAD is required as a cofactor.

It catalyses the reaction 2 reduced [2Fe-2S]-[ferredoxin] + NADP(+) + H(+) = 2 oxidized [2Fe-2S]-[ferredoxin] + NADPH. This is Ferredoxin--NADP reductase from Streptococcus gordonii (strain Challis / ATCC 35105 / BCRC 15272 / CH1 / DL1 / V288).